The following is a 249-amino-acid chain: tRNA pseudouridine synthase A (249 aa).

D54 acts as the Nucleophile in catalysis. Residue Y111 participates in substrate binding.

This sequence belongs to the tRNA pseudouridine synthase TruA family. In terms of assembly, homodimer.

It carries out the reaction uridine(38/39/40) in tRNA = pseudouridine(38/39/40) in tRNA. In terms of biological role, formation of pseudouridine at positions 38, 39 and 40 in the anticodon stem and loop of transfer RNAs. This Mycoplasma capricolum subsp. capricolum (strain California kid / ATCC 27343 / NCTC 10154) protein is tRNA pseudouridine synthase A.